We begin with the raw amino-acid sequence, 319 residues long: Oligopeptide transport ATP-binding protein OppF (319 aa).

Residues 5 to 255 (LNLKDLKVYY…PQHIYTKRLL (251 aa)) form the ABC transporter domain. 48-55 (GESGSGKS) lines the ATP pocket.

It belongs to the ABC transporter superfamily. In terms of assembly, the complex is composed of two ATP-binding proteins (OppD and OppF), two transmembrane proteins (OppB and OppC) and a solute-binding protein (OppA).

Its subcellular location is the cell membrane. The enzyme catalyses a [peptide](out) + ATP + H2O = a [peptide](in) + ADP + phosphate + H(+). Part of the ABC transporter complex OppABCDF involved in the uptake of oligopeptides. Probably responsible for energy coupling to the transport system. Essential for uptake of peptides larger than three amino acids and for growth in milk. The protein is Oligopeptide transport ATP-binding protein OppF (oppF) of Lactococcus lactis subsp. lactis (strain IL1403) (Streptococcus lactis).